Reading from the N-terminus, the 461-residue chain is Bifunctional protein GlmU (461 aa).

Residues 1-230 (MSKIHAVVLA…PEETLGVNDR (230 aa)) are pyrophosphorylase. Residues 9 to 12 (LAAG), Lys-23, Gln-73, 78 to 79 (GT), 101 to 103 (YGD), Gly-140, Glu-155, Asn-170, and Asn-228 each bind UDP-N-acetyl-alpha-D-glucosamine. Residue Asp-103 participates in Mg(2+) binding. Residue Asn-228 coordinates Mg(2+). The tract at residues 231–251 (VQLSEAEAYMKKRIMTGHMRN) is linker. The segment at 252-461 (GVTIIDPTST…KMPRKGKKQS (210 aa)) is N-acetyltransferase. Residues Arg-333 and Lys-351 each coordinate UDP-N-acetyl-alpha-D-glucosamine. The Proton acceptor role is filled by His-363. Residues Tyr-366 and Asn-377 each contribute to the UDP-N-acetyl-alpha-D-glucosamine site. Acetyl-CoA-binding positions include 386–387 (NY), Ala-423, and Arg-440.

In the N-terminal section; belongs to the N-acetylglucosamine-1-phosphate uridyltransferase family. This sequence in the C-terminal section; belongs to the transferase hexapeptide repeat family. Homotrimer. Requires Mg(2+) as cofactor.

Its subcellular location is the cytoplasm. The catalysed reaction is alpha-D-glucosamine 1-phosphate + acetyl-CoA = N-acetyl-alpha-D-glucosamine 1-phosphate + CoA + H(+). It carries out the reaction N-acetyl-alpha-D-glucosamine 1-phosphate + UTP + H(+) = UDP-N-acetyl-alpha-D-glucosamine + diphosphate. Its pathway is nucleotide-sugar biosynthesis; UDP-N-acetyl-alpha-D-glucosamine biosynthesis; N-acetyl-alpha-D-glucosamine 1-phosphate from alpha-D-glucosamine 6-phosphate (route II): step 2/2. It functions in the pathway nucleotide-sugar biosynthesis; UDP-N-acetyl-alpha-D-glucosamine biosynthesis; UDP-N-acetyl-alpha-D-glucosamine from N-acetyl-alpha-D-glucosamine 1-phosphate: step 1/1. The protein operates within bacterial outer membrane biogenesis; LPS lipid A biosynthesis. Its function is as follows. Catalyzes the last two sequential reactions in the de novo biosynthetic pathway for UDP-N-acetylglucosamine (UDP-GlcNAc). The C-terminal domain catalyzes the transfer of acetyl group from acetyl coenzyme A to glucosamine-1-phosphate (GlcN-1-P) to produce N-acetylglucosamine-1-phosphate (GlcNAc-1-P), which is converted into UDP-GlcNAc by the transfer of uridine 5-monophosphate (from uridine 5-triphosphate), a reaction catalyzed by the N-terminal domain. This Brevibacillus brevis (strain 47 / JCM 6285 / NBRC 100599) protein is Bifunctional protein GlmU.